Reading from the N-terminus, the 183-residue chain is GTP cyclohydrolase 1 (183 aa).

The Zn(2+) site is built by Cys71, His74, and Cys142.

This sequence belongs to the GTP cyclohydrolase I family. As to quaternary structure, homomer.

The catalysed reaction is GTP + H2O = 7,8-dihydroneopterin 3'-triphosphate + formate + H(+). The protein operates within cofactor biosynthesis; 7,8-dihydroneopterin triphosphate biosynthesis; 7,8-dihydroneopterin triphosphate from GTP: step 1/1. This chain is GTP cyclohydrolase 1, found in Leptospira biflexa serovar Patoc (strain Patoc 1 / Ames).